We begin with the raw amino-acid sequence, 173 residues long: RNA pyrophosphohydrolase (173 aa).

In terms of domain architecture, Nudix hydrolase spans 6-149 (GFRANVGIII…KRDVYRKVMK (144 aa)). A Nudix box motif is present at residues 38–59 (GGVDEGESAEEAMYRELYEEVG).

It belongs to the Nudix hydrolase family. RppH subfamily. The cofactor is a divalent metal cation.

Accelerates the degradation of transcripts by removing pyrophosphate from the 5'-end of triphosphorylated RNA, leading to a more labile monophosphorylated state that can stimulate subsequent ribonuclease cleavage. The sequence is that of RNA pyrophosphohydrolase from Shewanella piezotolerans (strain WP3 / JCM 13877).